Reading from the N-terminus, the 500-residue chain is uncharacterized protein (500 aa).

Residues 1–13 (MEPSQRSGSFSSI) show a composition bias toward low complexity. Positions 1–23 (MEPSQRSGSFSSISRRRSRVDSR) are disordered. A Phosphoserine modification is found at Ser-9. Transmembrane regions (helical) follow at residues 87 to 107 (VSIA…AVAL), 126 to 146 (LVIG…LCFA), 156 to 176 (LYFR…LLYC), 183 to 203 (WIYL…TFLY), 225 to 245 (MNIL…GILA), 261 to 281 (VASW…IFFF), 312 to 332 (FLLF…NGYQ), 351 to 371 (GNFI…SSFL), 380 to 400 (IMLG…VLDA), 408 to 428 (VYFF…APLI), 445 to 465 (IVVQ…GGAI), and 471 to 491 (VGFI…LIFM).

This sequence belongs to the major facilitator superfamily.

The protein resides in the golgi apparatus. It is found in the membrane. This is an uncharacterized protein from Schizosaccharomyces pombe (strain 972 / ATCC 24843) (Fission yeast).